Here is a 545-residue protein sequence, read N- to C-terminus: Chaperonin GroEL 2 (545 aa).

Residues Thr30–Pro33, Lys51, Asp87–Thr91, Gly415, Asn479–Ala481, and Asp495 each bind ATP.

Belongs to the chaperonin (HSP60) family. Forms a cylinder of 14 subunits composed of two heptameric rings stacked back-to-back. Interacts with the co-chaperonin GroES.

The protein resides in the cytoplasm. The catalysed reaction is ATP + H2O + a folded polypeptide = ADP + phosphate + an unfolded polypeptide.. Functionally, together with its co-chaperonin GroES, plays an essential role in assisting protein folding. The GroEL-GroES system forms a nano-cage that allows encapsulation of the non-native substrate proteins and provides a physical environment optimized to promote and accelerate protein folding. This is Chaperonin GroEL 2 from Escherichia coli O1:K1 / APEC.